Reading from the N-terminus, the 494-residue chain is WD repeat-containing protein 37 (494 aa).

Composition is skewed to polar residues over residues 1–13 and 22–31; these read MPTESASCSTARQ and SLSIRRTNSS. Residues 1 to 50 form a disordered region; sequence MPTESASCSTARQTKQKRKSHSLSIRRTNSSEQERTGLPRDMLEGQDSKL. Over residues 32 to 47 the composition is skewed to basic and acidic residues; sequence EQERTGLPRDMLEGQD. WD repeat units lie at residues 154-194 and 197-236; these read GHRD…CLVK and GHVGSVNSIKFHPSEQLALTASGDQTAHIWRYAVQLPTPQ. The segment at 237–265 is disordered; it reads PVADTSISGEDEVECSDKDEPDLDGDVSS. A compositionally biased stretch (acidic residues) spans 245–263; sequence GEDEVECSDKDEPDLDGDV. 5 WD repeats span residues 279–318, 321–360, 365–403, 406–445, and 452–493; these read SHQGVVIASDWLVGGKQAVTASWDRTANLYDVETSELVHS, GHDQELTHCCTHPTQRLVVTSSRDTTFRLWDFRDPSIHSV, GHTDTVTSAVFTVGDNVVSGSDDRTVKVWDLKNMRSPIA, RTDSAINRINVCVGQKIIALPHDNRQVRLFDMSGVRLARL, and GHRR…LLQE.

As to quaternary structure, forms homodimers. Interacts with PACS1. Interacts with PACS2.

It localises to the cytoplasm. Its subcellular location is the nucleus. Required for normal ER Ca2+ handling in lymphocytes. Together with PACS1, it plays an essential role in stabilizing peripheral lymphocyte populations. The protein is WD repeat-containing protein 37 (WDR37) of Homo sapiens (Human).